Consider the following 169-residue polypeptide: Crossover junction endodeoxyribonuclease RuvC (169 aa).

Catalysis depends on residues aspartate 11, glutamate 71, and aspartate 143. Mg(2+)-binding residues include aspartate 11, glutamate 71, and aspartate 143.

This sequence belongs to the RuvC family. In terms of assembly, homodimer which binds Holliday junction (HJ) DNA. The HJ becomes 2-fold symmetrical on binding to RuvC with unstacked arms; it has a different conformation from HJ DNA in complex with RuvA. In the full resolvosome a probable DNA-RuvA(4)-RuvB(12)-RuvC(2) complex forms which resolves the HJ. Mg(2+) serves as cofactor.

Its subcellular location is the cytoplasm. The catalysed reaction is Endonucleolytic cleavage at a junction such as a reciprocal single-stranded crossover between two homologous DNA duplexes (Holliday junction).. The RuvA-RuvB-RuvC complex processes Holliday junction (HJ) DNA during genetic recombination and DNA repair. Endonuclease that resolves HJ intermediates. Cleaves cruciform DNA by making single-stranded nicks across the HJ at symmetrical positions within the homologous arms, yielding a 5'-phosphate and a 3'-hydroxyl group; requires a central core of homology in the junction. The consensus cleavage sequence is 5'-(A/T)TT(C/G)-3'. Cleavage occurs on the 3'-side of the TT dinucleotide at the point of strand exchange. HJ branch migration catalyzed by RuvA-RuvB allows RuvC to scan DNA until it finds its consensus sequence, where it cleaves and resolves the cruciform DNA. This Rhizobium etli (strain CIAT 652) protein is Crossover junction endodeoxyribonuclease RuvC.